A 210-amino-acid chain; its full sequence is Pyridoxine/pyridoxamine 5'-phosphate oxidase (210 aa).

Residues 7 to 10 and Lys65 each bind substrate; that span reads RQSY. Residues 60–65, 75–76, Arg81, Lys82, and Gln104 contribute to the FMN site; these read RIVLIK and FT. Positions 122, 126, and 130 each coordinate substrate. FMN contacts are provided by residues 139–140 and Trp182; that span reads QS. 188–190 contacts substrate; it reads RLH. Arg192 is a binding site for FMN.

The protein belongs to the pyridoxamine 5'-phosphate oxidase family. Homodimer. Requires FMN as cofactor.

The catalysed reaction is pyridoxamine 5'-phosphate + O2 + H2O = pyridoxal 5'-phosphate + H2O2 + NH4(+). The enzyme catalyses pyridoxine 5'-phosphate + O2 = pyridoxal 5'-phosphate + H2O2. Its pathway is cofactor metabolism; pyridoxal 5'-phosphate salvage; pyridoxal 5'-phosphate from pyridoxamine 5'-phosphate: step 1/1. The protein operates within cofactor metabolism; pyridoxal 5'-phosphate salvage; pyridoxal 5'-phosphate from pyridoxine 5'-phosphate: step 1/1. Functionally, catalyzes the oxidation of either pyridoxine 5'-phosphate (PNP) or pyridoxamine 5'-phosphate (PMP) into pyridoxal 5'-phosphate (PLP). The polypeptide is Pyridoxine/pyridoxamine 5'-phosphate oxidase (Bordetella avium (strain 197N)).